The chain runs to 325 residues: Homoserine O-succinyltransferase (325 aa).

The Acyl-thioester intermediate role is filled by Cys-142. Residues Lys-163 and Ser-191 each coordinate substrate. His-234 serves as the catalytic Proton acceptor. Glu-236 is a catalytic residue. Arg-248 contributes to the substrate binding site.

The protein belongs to the MetA family.

The protein localises to the cytoplasm. It catalyses the reaction L-homoserine + succinyl-CoA = O-succinyl-L-homoserine + CoA. It functions in the pathway amino-acid biosynthesis; L-methionine biosynthesis via de novo pathway; O-succinyl-L-homoserine from L-homoserine: step 1/1. Functionally, transfers a succinyl group from succinyl-CoA to L-homoserine, forming succinyl-L-homoserine. This Bradyrhizobium japonicum protein is Homoserine O-succinyltransferase.